The chain runs to 291 residues: Ribonuclease Z (291 aa).

7 residues coordinate Zn(2+): histidine 60, histidine 62, aspartate 64, histidine 65, histidine 132, aspartate 200, and histidine 256. The active-site Proton acceptor is aspartate 64.

Belongs to the RNase Z family. As to quaternary structure, homodimer. Zn(2+) is required as a cofactor.

The catalysed reaction is Endonucleolytic cleavage of RNA, removing extra 3' nucleotides from tRNA precursor, generating 3' termini of tRNAs. A 3'-hydroxy group is left at the tRNA terminus and a 5'-phosphoryl group is left at the trailer molecule.. In terms of biological role, zinc phosphodiesterase, which displays some tRNA 3'-processing endonuclease activity. Probably involved in tRNA maturation, by removing a 3'-trailer from precursor tRNA. This chain is Ribonuclease Z, found in Metallosphaera sedula (strain ATCC 51363 / DSM 5348 / JCM 9185 / NBRC 15509 / TH2).